Reading from the N-terminus, the 320-residue chain is UV DNA damage endonuclease (320 aa).

It belongs to the uve1/UvsE family.

In terms of biological role, component in a DNA repair pathway. Removal of UV LIGHT damaged nucleotides. Recognizes pyrimidine dimers and cleave a phosphodiester bond immediately 5' to the lesion. The protein is UV DNA damage endonuclease of Bacillus velezensis (strain DSM 23117 / BGSC 10A6 / LMG 26770 / FZB42) (Bacillus amyloliquefaciens subsp. plantarum).